Here is a 233-residue protein sequence, read N- to C-terminus: Purine nucleoside phosphorylase DeoD-type (233 aa).

His-4 contacts a purine D-ribonucleoside. Phosphate contacts are provided by residues Gly-20, Arg-24, Arg-43, and 87–90 (RIGT). Residues 179-181 (EME) and 203-204 (SD) contribute to the a purine D-ribonucleoside site. Catalysis depends on Asp-204, which acts as the Proton donor.

This sequence belongs to the PNP/UDP phosphorylase family. Homohexamer; trimer of homodimers.

The catalysed reaction is a purine D-ribonucleoside + phosphate = a purine nucleobase + alpha-D-ribose 1-phosphate. It catalyses the reaction a purine 2'-deoxy-D-ribonucleoside + phosphate = a purine nucleobase + 2-deoxy-alpha-D-ribose 1-phosphate. Its function is as follows. Catalyzes the reversible phosphorolytic breakdown of the N-glycosidic bond in the beta-(deoxy)ribonucleoside molecules, with the formation of the corresponding free purine bases and pentose-1-phosphate. This Helicobacter pylori (strain J99 / ATCC 700824) (Campylobacter pylori J99) protein is Purine nucleoside phosphorylase DeoD-type.